An 811-amino-acid chain; its full sequence is E3 ubiquitin-protein ligase RNF10 (811 aa).

Polar residues predominate over residues 1 to 10 (MPLSSPNAAA). A disordered region spans residues 1 to 119 (MPLSSPNAAA…SFNGGRRDEV (119 aa)). Position 5 is a phosphoserine (Ser-5). Composition is skewed to low complexity over residues 18-31 (NSGS…SGSS), 78-90 (NNQS…QKSK), and 104-113 (SKLFSSSFNG). The tract at residues 101 to 185 (GGSSKLFSSS…FNKELFLQAN (85 aa)) is interaction with MEOX2. 2 positions are modified to phosphoserine: Ser-110 and Ser-128. Residues 225 to 267 (CPICLYPPTAAKITRCGHIFCWACILHYLSLSEKTWSKCPICY) form an RING-type zinc finger. Over residues 653 to 662 (DSALGPTSTE) the composition is skewed to polar residues. 3 disordered regions span residues 653–672 (DSAL…ISPL), 724–761 (DVWP…VPSF), and 776–811 (LDTP…VHTK). Residues 724-736 (DVWPKTAPKKDEN) show a composition bias toward basic and acidic residues. A compositionally biased stretch (polar residues) spans 802-811 (LFSTSVVHTK).

It belongs to the RNF10 family. In terms of assembly, interacts with MEOX2.

The protein localises to the cytoplasm. Its subcellular location is the nucleus. It catalyses the reaction S-ubiquitinyl-[E2 ubiquitin-conjugating enzyme]-L-cysteine + [acceptor protein]-L-lysine = [E2 ubiquitin-conjugating enzyme]-L-cysteine + N(6)-ubiquitinyl-[acceptor protein]-L-lysine.. Its pathway is protein modification; protein ubiquitination. In terms of biological role, E3 ubiquitin-protein ligase that catalyzes monoubiquitination of 40S ribosomal proteins RPS2/us5 and RPS3/us3 in response to ribosome stalling. Part of a ribosome quality control that takes place when ribosomes have stalled during translation initiation (iRQC): RNF10 acts by mediating monoubiquitination of RPS2/us5 and RPS3/us3, promoting their degradation by the proteasome. Also promotes ubiquitination of 40S ribosomal proteins in response to ribosome stalling during translation elongation. The action of RNF10 in iRQC is counteracted by USP10. May also act as a transcriptional factor involved in the regulation of MAG (Myelin-associated glycoprotein) expression. Acts as a regulator of Schwann cell differentiation and myelination. The protein is E3 ubiquitin-protein ligase RNF10 of Homo sapiens (Human).